The following is a 155-amino-acid chain: Small ribosomal subunit protein uS7 (155 aa).

The protein belongs to the universal ribosomal protein uS7 family. Part of the 30S ribosomal subunit. Contacts proteins S9 and S11.

In terms of biological role, one of the primary rRNA binding proteins, it binds directly to 16S rRNA where it nucleates assembly of the head domain of the 30S subunit. Is located at the subunit interface close to the decoding center, probably blocks exit of the E-site tRNA. The polypeptide is Small ribosomal subunit protein uS7 (Kosmotoga olearia (strain ATCC BAA-1733 / DSM 21960 / TBF 19.5.1)).